Here is a 470-residue protein sequence, read N- to C-terminus: Properdin (470 aa).

The signal sequence occupies residues 1-26 (MTAPVQVPQSLLLLLMLLLTLPATGS). 7 consecutive TSP type-1 domains span residues 27 to 75 (DPVL…QACR), 76 to 133 (SPRW…QCCP), 135 to 190 (MGGW…QVCP), 192 to 254 (HGAW…PPCP), 256 to 312 (AGGW…VPCP), 314 to 376 (DGEW…QNCI), and 380 to 463 (KGSW…PACK). Cystine bridges form between cysteine 31/cysteine 55, cysteine 42/cysteine 71, and cysteine 56/cysteine 74. 2 C-linked (Man) tryptophan glycosylation sites follow: tryptophan 82 and tryptophan 85. Disulfide bonds link cysteine 88/cysteine 126, cysteine 92/cysteine 132, cysteine 103/cysteine 110, cysteine 131/cysteine 169, cysteine 147/cysteine 183, cysteine 151/cysteine 189, and cysteine 162/cysteine 173. 3 C-linked (Man) tryptophan glycosylation sites follow: tryptophan 138, tryptophan 141, and tryptophan 144. O-linked (Fuc...) threonine glycosylation occurs at threonine 150. Residues tryptophan 195, tryptophan 198, and tryptophan 201 are each glycosylated (C-linked (Man) tryptophan). Intrachain disulfides connect cysteine 204–cysteine 247, cysteine 208–cysteine 253, and cysteine 223–cysteine 237. Serine 207 carries an O-linked (Fuc...) serine glycan. C-linked (Man) tryptophan glycosylation is found at tryptophan 259 and tryptophan 262. Disulfide bonds link cysteine 268–cysteine 305, cysteine 272–cysteine 311, and cysteine 283–cysteine 295. Threonine 271 carries an O-linked (Fuc...) threonine glycan. C-linked (Man) tryptophan glycans are attached at residues tryptophan 320 and tryptophan 323. Cystine bridges form between cysteine 326/cysteine 369, cysteine 336/cysteine 375, and cysteine 349/cysteine 359. The interval 350-358 (KGRKFNGQR) is interaction with Complement C3 beta chain. C-linked (Man) tryptophan glycans are attached at residues tryptophan 383, tryptophan 386, and tryptophan 389. Intrachain disulfides connect cysteine 392/cysteine 456, cysteine 396/cysteine 462, and cysteine 408/cysteine 440. Asparagine 429 is a glycosylation site (N-linked (GlcNAc...) asparagine).

As to quaternary structure, in plasma, properdin exists as dimers, trimers or tetramers in the relative proportions of 26:54:20. Interacts with the pro-C3-convertase enzyme complex (C3b-Bb) comprised of Complement C3 beta chain (C3b) and the Complement factor B Bb fragment (Bb), where it binds (via its TSP type-1 5 domain) with C3b and Bb. This interaction stabilizes the complex and allows it to become the active C3-convertase enzyme complex (C3b-Bb-FP). Interacts with C3b. Interacts with CFB.

It localises to the secreted. Functionally, a positive regulator of the alternate pathway of complement. It binds to and stabilizes the C3- and C5-convertase enzyme complexes. Inhibits CFI-CFH mediated degradation of Inhibits CFI-CFH mediated degradation of Complement C3 beta chain (C3b). The protein is Properdin (CFP) of Cavia porcellus (Guinea pig).